We begin with the raw amino-acid sequence, 214 residues long: Large ribosomal subunit protein uL16-like (214 aa).

It belongs to the universal ribosomal protein uL16 family. Component of the 60S large ribosomal subunit (LSU).

The protein resides in the cytoplasm. Testis-specific component of the ribosome, which is required for the transition from prophase to metaphase in male meiosis I. Compensates for the inactivated X-linked RPL10 paralog during spermatogenesis. The ribosome is a large ribonucleoprotein complex responsible for the synthesis of proteins in the cell. The small ribosomal subunit (SSU) binds messenger RNAs (mRNAs) and translates the encoded message by selecting cognate aminoacyl-transfer RNA (tRNA) molecules. The large subunit (LSU) contains the ribosomal catalytic site termed the peptidyl transferase center (PTC), which catalyzes the formation of peptide bonds, thereby polymerizing the amino acids delivered by tRNAs into a polypeptide chain. The nascent polypeptides leave the ribosome through a tunnel in the LSU and interact with protein factors that function in enzymatic processing, targeting, and the membrane insertion of nascent chains at the exit of the ribosomal tunnel. This is Large ribosomal subunit protein uL16-like (RPL10L) from Bos taurus (Bovine).